A 474-amino-acid polypeptide reads, in one-letter code: MTAPRTPRKAFGRLSLPERTYLADALRTETVGGVLLLVAAIAALVWANIPALHDSYESVSHFHFGPAALGLNLSVAHWAADGLLAIFFFVAGIELKRELVAGDLKDPKAAALPVVAALCGMVVPAVVYTVTSTAGGGSLSGWAVPTATDIAFALAVLAVIGTSLPSALRAFLLTLAVVDDLFAILIIAVFFTETLNFAALGGAVVGLAVFWLLLRKGVRGWYVYVPLGLVIWALMYNSGVHATIAGVAMGLMLRCHRREGEDHSPGEHIEHLVRPLSAGLAVPLFALFSAGVAITGGALADVFTKPETLGVVLGLVVGKTLGIFGGTWLTSRFTRASLSDDLQWADVFAVATLAGIGFTVSLLIGELAFEDDAAMTSEVKAAVLTGSLIAAALATVLLKIRNAKYRGMVAEEERDDDLSGVPDIYEEDDPAYHLRVAAIYEKKAAEHRRIAEEMESARLAEVAGGAGDEGDGPA.

11 helical membrane-spanning segments follow: residues 31–51 (VGGV…NIPA), 73–93 (LSVA…VAGI), 110–130 (AALP…VYTV), 141–161 (GWAV…AVIG), 171–191 (FLLT…AVFF), 194–214 (TLNF…WLLL), 220–240 (GWYV…NSGV), 280–300 (LAVP…GALA), 309–329 (LGVV…GTWL), 347–367 (VFAV…IGEL), and 378–398 (EVKA…TVLL).

Belongs to the NhaA Na(+)/H(+) (TC 2.A.33) antiporter family.

Its subcellular location is the cell membrane. It catalyses the reaction Na(+)(in) + 2 H(+)(out) = Na(+)(out) + 2 H(+)(in). Na(+)/H(+) antiporter that extrudes sodium in exchange for external protons. This chain is Na(+)/H(+) antiporter NhaA 3, found in Streptomyces coelicolor (strain ATCC BAA-471 / A3(2) / M145).